Consider the following 647-residue polypeptide: DNA mismatch repair protein MutL (647 aa).

Disordered regions lie at residues 356-391 (EGSQAPLPVTPQPRPALTSEKPVPAPQAQPQQSSIS) and 407-428 (PRPQPSLRPQYQGSVTSKEALP). A compositionally biased stretch (polar residues) spans 413–423 (LRPQYQGSVTS).

Belongs to the DNA mismatch repair MutL/HexB family.

Functionally, this protein is involved in the repair of mismatches in DNA. It is required for dam-dependent methyl-directed DNA mismatch repair. May act as a 'molecular matchmaker', a protein that promotes the formation of a stable complex between two or more DNA-binding proteins in an ATP-dependent manner without itself being part of a final effector complex. The protein is DNA mismatch repair protein MutL of Citrifermentans bemidjiense (strain ATCC BAA-1014 / DSM 16622 / JCM 12645 / Bem) (Geobacter bemidjiensis).